We begin with the raw amino-acid sequence, 416 residues long: Cysteate synthase (416 aa).

Residue K104 is modified to N6-(pyridoxal phosphate)lysine. A pyridoxal 5'-phosphate-binding site is contributed by N130.

This sequence belongs to the threonine synthase family. Cysteate synthase subfamily. Homotrimer. The cofactor is pyridoxal 5'-phosphate.

The enzyme catalyses O-phospho-L-serine + sulfite + H(+) = L-cysteate + phosphate. Its pathway is cofactor biosynthesis; coenzyme M biosynthesis. With respect to regulation, is inhibited by AP3 (DL-2-amino-3-phosphonopropionate) and, to a lesser extent, by L-aspartate or AP4 (DL-2-amino-4-phosphonobutyrate). Is also inhibited by EDTA in vitro. In terms of biological role, specifically catalyzes the beta-elimination of phosphate from L-phosphoserine and the beta-addition of sulfite to the dehydroalanine intermediate to produce L-cysteate. Does not display threonine synthase activity like the paralog protein ThrC. The polypeptide is Cysteate synthase (Methanosarcina acetivorans (strain ATCC 35395 / DSM 2834 / JCM 12185 / C2A)).